A 691-amino-acid chain; its full sequence is Elongation factor G (691 aa).

Residues 8 to 283 (EDYRNFGIMA…AVVDYLPSPA (276 aa)) form the tr-type G domain. GTP contacts are provided by residues 17–24 (AHIDAGKT), 81–85 (DTPGH), and 135–138 (NKMD).

Belongs to the TRAFAC class translation factor GTPase superfamily. Classic translation factor GTPase family. EF-G/EF-2 subfamily.

It is found in the cytoplasm. In terms of biological role, catalyzes the GTP-dependent ribosomal translocation step during translation elongation. During this step, the ribosome changes from the pre-translocational (PRE) to the post-translocational (POST) state as the newly formed A-site-bound peptidyl-tRNA and P-site-bound deacylated tRNA move to the P and E sites, respectively. Catalyzes the coordinated movement of the two tRNA molecules, the mRNA and conformational changes in the ribosome. The sequence is that of Elongation factor G from Methylobacterium sp. (strain 4-46).